A 194-amino-acid polypeptide reads, in one-letter code: dTTP/UTP pyrophosphatase (194 aa).

Asp73 (proton acceptor) is an active-site residue.

The protein belongs to the Maf family. YhdE subfamily. A divalent metal cation is required as a cofactor.

It localises to the cytoplasm. It carries out the reaction dTTP + H2O = dTMP + diphosphate + H(+). The catalysed reaction is UTP + H2O = UMP + diphosphate + H(+). Its function is as follows. Nucleoside triphosphate pyrophosphatase that hydrolyzes dTTP and UTP. May have a dual role in cell division arrest and in preventing the incorporation of modified nucleotides into cellular nucleic acids. This chain is dTTP/UTP pyrophosphatase, found in Clostridium botulinum (strain 657 / Type Ba4).